The primary structure comprises 240 residues: Fatty acid metabolism regulator protein (240 aa).

One can recognise an HTH gntR-type domain in the interval 6–74; the sequence is KGPASFAEKY…HGKPTRVNNF (69 aa). The H-T-H motif DNA-binding region spans 34–53; that stretch reads ERELSELIGVTRTTLREVLQ.

Homodimer.

The protein resides in the cytoplasm. Functionally, multifunctional regulator of fatty acid metabolism. The polypeptide is Fatty acid metabolism regulator protein (Shewanella oneidensis (strain ATCC 700550 / JCM 31522 / CIP 106686 / LMG 19005 / NCIMB 14063 / MR-1)).